Consider the following 370-residue polypeptide: CST complex subunit STN1 (370 aa).

Residues Met1 to Pro187 form an interaction with CTC1 region. Positions Val57–Val157 form a DNA-binding region, OB. 2 winged helix-turn-helix (wHTH) regions span residues Glu193–Arg297 and Glu298–Phe370.

This sequence belongs to the STN1 family. In terms of assembly, component of the CST complex, composed of TEN1/C17orf106, CTC1/C17orf68 and STN1; in the complex interacts directly with TEN1 and CTC1. Interacts with ACD/TPP1, POT1 and POLA1.

Its subcellular location is the nucleus. It localises to the chromosome. It is found in the telomere. Component of the CST complex proposed to act as a specialized replication factor promoting DNA replication under conditions of replication stress or natural replication barriers such as the telomere duplex. The CST complex binds single-stranded DNA with high affinity in a sequence-independent manner, while isolated subunits bind DNA with low affinity by themselves. Initially the CST complex has been proposed to protect telomeres from DNA degradation. However, the CST complex has been shown to be involved in several aspects of telomere replication. The CST complex inhibits telomerase and is involved in telomere length homeostasis; it is proposed to bind to newly telomerase-synthesized 3' overhangs and to terminate telomerase action implicating the association with the ACD:POT1 complex thus interfering with its telomerase stimulation activity. The CST complex is also proposed to be involved in fill-in synthesis of the telomeric C-strand probably implicating recruitment and activation of DNA polymerase alpha. The CST complex facilitates recovery from many forms of exogenous DNA damage; seems to be involved in the re-initiation of DNA replication at repaired forks and/or dormant origins. Required for efficicient replication of the duplex region of the telomere. Promotes efficient replication of lagging-strand telomeres. Promotes general replication start following replication-fork stalling implicating new origin firing. May be in involved in C-strand fill-in during late S/G2 phase independent of its role in telomere duplex replication. This chain is CST complex subunit STN1, found in Bos taurus (Bovine).